A 274-amino-acid polypeptide reads, in one-letter code: Lectin-like protein (274 aa).

Residues 1-19 (MKIHKLCFLALLLAHTTSA) form the signal peptide. Residues 28 to 268 (TSELVFLGDA…RHDIWSWTFQ (241 aa)) form a legume-lectin like region. The tract at residues 62-81 (SHGQSLWSTPVPFKPSSNSS) is disordered. Asparagine 129 carries N-linked (GlcNAc...) asparagine glycosylation. A Phosphoserine modification is found at serine 238.

The protein belongs to the leguminous lectin family. In terms of tissue distribution, expressed in seedlings and leaves of adult plants.

The protein resides in the secreted. It is found in the extracellular space. The protein localises to the apoplast. It localises to the cell membrane. Its function is as follows. Plays a positive role in the effector-triggered immunity (ETI) response. Involved in salicylic acid (SA)-mediated processes occurring in ETI response, but is not involved in the autophagy process. Promotes systemic rather than local immunity. Essential for systemic acquired resistance (SAR), but not necessary for immune signaling downstream of SA. May act in parallel with SA. This Arabidopsis thaliana (Mouse-ear cress) protein is Lectin-like protein.